Here is a 389-residue protein sequence, read N- to C-terminus: Smad nuclear interacting protein 1 (389 aa).

Residues 1-10 (MKAGKSERER) are compositionally biased toward basic and acidic residues. The interval 1–212 (MKAGKSERER…GNKNKEVPVK (212 aa)) is disordered. The residue at position 18 (Ser-18) is a Phosphoserine. Lys-28 is covalently cross-linked (Glycyl lysine isopeptide (Lys-Gly) (interchain with G-Cter in SUMO); alternate). Residue Lys-28 forms a Glycyl lysine isopeptide (Lys-Gly) (interchain with G-Cter in SUMO1); alternate linkage. Lys-28 participates in a covalent cross-link: Glycyl lysine isopeptide (Lys-Gly) (interchain with G-Cter in SUMO2); alternate. Residues 28-43 (KQERLSPEPVAHRRPD) show a composition bias toward basic and acidic residues. Residues Ser-33 and Ser-48 each carry the phosphoserine modification. Over residues 54–72 (AESGSAGHRGSRARGASRS) the composition is skewed to low complexity. The span at 73–95 (PAKKKSKSSGRRSKSPRTKRSRS) shows a compositional bias: basic residues. Ser-95 carries the phosphoserine modification. 2 stretches are compositionally biased toward basic and acidic residues: residues 103-138 (VKQEREDHPRRGREDRQHRELSEQEHRRARNSERDR) and 147-163 (RSSDERPVSGQGRDRDS). A Glycyl lysine isopeptide (Lys-Gly) (interchain with G-Cter in SUMO2) cross-link involves residue Lys-104. Ser-149 bears the Phosphoserine mark. A coiled-coil region spans residues 166–197 (LQAQEEERDFNNARRREHRQQNESAGAEAQEV). A Glycyl lysine isopeptide (Lys-Gly) (interchain with G-Cter in SUMO2) cross-link involves residue Lys-214. The 64-residue stretch at 272-335 (YLLGRHRRIA…NGTFLNNKRI (64 aa)) folds into the FHA domain. Positions 363–373 (ESSDTSELDRK) are enriched in basic and acidic residues. The tract at residues 363-389 (ESSDTSELDRKEDEDEEEEEEMVSDSS) is disordered. Over residues 374 to 389 (EDEDEEEEEEMVSDSS) the composition is skewed to acidic residues. Ser-386 is subject to Phosphoserine.

As to quaternary structure, component of activated spliceosome complexes. Component of the minor spliceosome, which splices U12-type introns. Binds SMAD4 and CREBBP/EP300. Binds the SMAD1/OAZ1/PSMB4 complex. Interacts with DROSHA and SMARCA4. Component of the SNARP complex which consists at least of SNIP1, SNW1, THRAP3, BCLAF1 and PNN. In terms of processing, degraded by the proteasome upon binding to the SMAD1/OAZ1/PSMB4 complex.

The protein resides in the nucleus. Its function is as follows. Required for pre-mRNA splicing as component of the spliceosome. As a component of the minor spliceosome, involved in the splicing of U12-type introns in pre-mRNAs. Down-regulates NF-kappa-B signaling by competing with RELA for CREBBP/EP300 binding. Involved in the microRNA (miRNA) biogenesis. May be involved in cyclin-D1/CCND1 mRNA stability through the SNARP complex which associates with both the 3'end of the CCND1 gene and its mRNA. This is Smad nuclear interacting protein 1 (Snip1) from Rattus norvegicus (Rat).